The following is a 237-amino-acid chain: Fluoroquinolones export permease protein MT2761 (237 aa).

A run of 6 helical transmembrane segments spans residues F20–V40, Y49–F69, V96–G116, L119–S139, V147–V167, and L199–C219.

In terms of assembly, the complex is composed of 2 ATP-binding proteins and 2 transmembrane proteins.

Its subcellular location is the cell membrane. In terms of biological role, part of the ABC transporter complex involved in fluoroquinolones export. Probably responsible for the translocation of the substrate across the membrane. The polypeptide is Fluoroquinolones export permease protein MT2761 (Mycobacterium tuberculosis (strain CDC 1551 / Oshkosh)).